We begin with the raw amino-acid sequence, 421 residues long: Elsinochrome C biosynthesis regulatory protein elcR (421 aa).

Positions Met1 to Gly16 are enriched in polar residues. Positions Met1–Arg20 are disordered. Positions Cys27–Cys54 form a DNA-binding region, zn(2)-C6 fungal-type.

It is found in the nucleus. Its function is as follows. Transcription regulator of the gene cluster that mediates the biosynthesis of elsinochrome C, a perelyenequinone phytotoxin structurally similar to cercosporin. The chain is Elsinochrome C biosynthesis regulatory protein elcR from Phaeosphaeria nodorum (strain SN15 / ATCC MYA-4574 / FGSC 10173) (Glume blotch fungus).